We begin with the raw amino-acid sequence, 416 residues long: 2,3-bisphosphoglycerate-independent phosphoglycerate mutase (416 aa).

The protein belongs to the BPG-independent phosphoglycerate mutase family. A-PGAM subfamily.

The enzyme catalyses (2R)-2-phosphoglycerate = (2R)-3-phosphoglycerate. The protein operates within carbohydrate degradation; glycolysis; pyruvate from D-glyceraldehyde 3-phosphate: step 3/5. Its function is as follows. Catalyzes the interconversion of 2-phosphoglycerate and 3-phosphoglycerate. This is 2,3-bisphosphoglycerate-independent phosphoglycerate mutase from Ignicoccus hospitalis (strain KIN4/I / DSM 18386 / JCM 14125).